Reading from the N-terminus, the 1046-residue chain is Translation initiation factor IF-2 (1046 aa).

The interval 49–450 (ALQQGNGGKA…GVMLPRGNGQ (402 aa)) is disordered. 2 stretches are compositionally biased toward low complexity: residues 57 to 80 (KAAP…ARPA) and 89 to 106 (PAAA…AAPA). Residues 107–128 (APGPRPGPKPAPRPAPAAPAPA) are compositionally biased toward pro residues. Positions 129-169 (APEFTAPPSAPAAPAAAASGPRPGARPGAPKPGGARPATPG) are enriched in low complexity. Residues 177 to 194 (RGERTDRGDRGDRGDRQG) are compositionally biased toward basic and acidic residues. Low complexity predominate over residues 195-214 (AARPGGQAPRPGARPAGPRP). Gly residues-rich tracts occupy residues 239 to 248 (PRPGGAGAPG) and 266 to 280 (GGPG…GPGG). Low complexity predominate over residues 302-318 (GNRPNPGMMPQRPAAGP). Over residues 319-414 (RPGGGGPGGR…GTQGAFGRPG (96 aa)) the composition is skewed to gly residues. Over residues 418–427 (RRGRKSKRQR) the composition is skewed to basic residues. Residues 539 to 711 (ARPPVVTVMG…VVLTADASLD (173 aa)) enclose the tr-type G domain. Positions 548–555 (GHVDHGKT) are G1. 548–555 (GHVDHGKT) provides a ligand contact to GTP. The interval 573–577 (GITQH) is G2. Positions 598 to 601 (DTPG) are G3. GTP is bound by residues 598–602 (DTPGH) and 652–655 (NKID). The segment at 652-655 (NKID) is G4. Residues 688–690 (SAK) are G5.

It belongs to the TRAFAC class translation factor GTPase superfamily. Classic translation factor GTPase family. IF-2 subfamily.

The protein resides in the cytoplasm. In terms of biological role, one of the essential components for the initiation of protein synthesis. Protects formylmethionyl-tRNA from spontaneous hydrolysis and promotes its binding to the 30S ribosomal subunits. Also involved in the hydrolysis of GTP during the formation of the 70S ribosomal complex. The chain is Translation initiation factor IF-2 from Streptomyces avermitilis (strain ATCC 31267 / DSM 46492 / JCM 5070 / NBRC 14893 / NCIMB 12804 / NRRL 8165 / MA-4680).